The primary structure comprises 114 residues: uncharacterized protein (114 aa).

Functionally, possibly involved in pGI2 replication mechanism. This is an uncharacterized protein from Bacillus thuringiensis.